The chain runs to 263 residues: Hydroxyethylthiazole kinase 1 (263 aa).

Met-42 contacts substrate. Positions 118 and 164 each coordinate ATP. Gly-191 is a substrate binding site.

The protein belongs to the Thz kinase family. Mg(2+) is required as a cofactor.

It catalyses the reaction 5-(2-hydroxyethyl)-4-methylthiazole + ATP = 4-methyl-5-(2-phosphooxyethyl)-thiazole + ADP + H(+). It participates in cofactor biosynthesis; thiamine diphosphate biosynthesis; 4-methyl-5-(2-phosphoethyl)-thiazole from 5-(2-hydroxyethyl)-4-methylthiazole: step 1/1. Functionally, catalyzes the phosphorylation of the hydroxyl group of 4-methyl-5-beta-hydroxyethylthiazole (THZ). The chain is Hydroxyethylthiazole kinase 1 from Clostridium botulinum (strain ATCC 19397 / Type A).